Reading from the N-terminus, the 183-residue chain is Type II secretion system protein H (183 aa).

Positions 1–8 (MRRHRQSG) are cleaved as a propeptide — leader sequence. Residue F9 is modified to N-methylphenylalanine. Residues 9 to 28 (FTLLEVLLVAMLMGLVATAV) traverse the membrane as a helical segment.

It belongs to the GSP H family. As to quaternary structure, type II secretion is composed of four main components: the outer membrane complex, the inner membrane complex, the cytoplasmic secretion ATPase and the periplasm-spanning pseudopilus. Interacts with core component ExeG. Post-translationally, cleaved by prepilin peptidase. In terms of processing, methylated by prepilin peptidase at the amino group of the N-terminal phenylalanine once the leader sequence is cleaved by prepilin peptidase.

It localises to the cell inner membrane. In terms of biological role, component of the type II secretion system required for the energy-dependent secretion of extracellular factors such as proteases and toxins from the periplasm. Part of the pseudopilus tip complex that is critical for the recognition and binding of secretion substrates. This Aeromonas hydrophila protein is Type II secretion system protein H (exeH).